We begin with the raw amino-acid sequence, 209 residues long: Uridine kinase (209 aa).

12–19 (GGSGSGKT) serves as a coordination point for ATP.

It belongs to the uridine kinase family.

It is found in the cytoplasm. It catalyses the reaction uridine + ATP = UMP + ADP + H(+). The catalysed reaction is cytidine + ATP = CMP + ADP + H(+). It participates in pyrimidine metabolism; CTP biosynthesis via salvage pathway; CTP from cytidine: step 1/3. The protein operates within pyrimidine metabolism; UMP biosynthesis via salvage pathway; UMP from uridine: step 1/1. This chain is Uridine kinase, found in Listeria innocua serovar 6a (strain ATCC BAA-680 / CLIP 11262).